Here is a 474-residue protein sequence, read N- to C-terminus: Trehalose-6-phosphate synthase (474 aa).

Arginine 10 is a D-glucose 6-phosphate binding site. 22 to 23 (GG) serves as a coordination point for UDP-alpha-D-glucose. Residues tyrosine 77 and aspartate 131 each coordinate D-glucose 6-phosphate. UDP-alpha-D-glucose contacts are provided by arginine 263 and lysine 268. Arginine 301 provides a ligand contact to D-glucose 6-phosphate. UDP-alpha-D-glucose is bound by residues phenylalanine 340 and 366-370 (LVAKE).

The protein belongs to the glycosyltransferase 20 family. As to quaternary structure, homotetramer.

The catalysed reaction is D-glucose 6-phosphate + UDP-alpha-D-glucose = alpha,alpha-trehalose 6-phosphate + UDP + H(+). It functions in the pathway glycan biosynthesis; trehalose biosynthesis. Its function is as follows. Probably involved in the osmoprotection via the biosynthesis of trehalose. Catalyzes the transfer of glucose from UDP-alpha-D-glucose (UDP-Glc) to D-glucose 6-phosphate (Glc-6-P) to form trehalose-6-phosphate. Acts with retention of the anomeric configuration of the UDP-sugar donor. In Shigella dysenteriae serotype 1 (strain Sd197), this protein is Trehalose-6-phosphate synthase.